The primary structure comprises 175 residues: MIDDDGYRPNVGIVICNRQGEVLWARRYGQHSWQFPQGGINPGETPEQAMYRELFEEVGLNKKDVRILASTRNWLRYKLPKRLVRWDTKPVCIGQKQRWFLLQLMCNEADINMQRSSTPEFDGWRWVSYWYPVRQVVSFKRDVYRRVMKEFAPTVMPVQEAAPPRVPPAYRRKRG.

The Nudix hydrolase domain maps to Gly-6–Lys-149. A Nudix box motif is present at residues Gly-38–Gly-59.

It belongs to the Nudix hydrolase family. RppH subfamily. The cofactor is a divalent metal cation.

Functionally, accelerates the degradation of transcripts by removing pyrophosphate from the 5'-end of triphosphorylated RNA, leading to a more labile monophosphorylated state that can stimulate subsequent ribonuclease cleavage. This Yersinia enterocolitica serotype O:8 / biotype 1B (strain NCTC 13174 / 8081) protein is RNA pyrophosphohydrolase.